A 1199-amino-acid chain; its full sequence is DNA-directed RNA polymerase subunit beta (1199 aa).

The interval 1175–1199 (EEKKAHEAAAQATDGKSANSTDDKK) is disordered. A compositionally biased stretch (polar residues) spans 1188–1199 (DGKSANSTDDKK).

Belongs to the RNA polymerase beta chain family. The RNAP catalytic core consists of 2 alpha, 1 beta, 1 beta' and 1 omega subunit. When a sigma factor is associated with the core the holoenzyme is formed, which can initiate transcription.

It carries out the reaction RNA(n) + a ribonucleoside 5'-triphosphate = RNA(n+1) + diphosphate. DNA-dependent RNA polymerase catalyzes the transcription of DNA into RNA using the four ribonucleoside triphosphates as substrates. In Lacticaseibacillus paracasei (strain ATCC 334 / BCRC 17002 / CCUG 31169 / CIP 107868 / KCTC 3260 / NRRL B-441) (Lactobacillus paracasei), this protein is DNA-directed RNA polymerase subunit beta.